Reading from the N-terminus, the 351-residue chain is Glucose 1-dehydrogenase 1 (351 aa).

Cys39 contacts Zn(2+). Position 41 (Thr41) interacts with substrate. The Zn(2+) site is built by His64 and Glu65. 2 residues coordinate substrate: Glu113 and Glu149. Residue Glu149 coordinates Zn(2+). NADP(+) contacts are provided by residues 182–185, 265–267, and 292–294; these read AGPI, LGI, and ATN. Residue Asn294 coordinates substrate.

Belongs to the zinc-containing alcohol dehydrogenase family. Glucose 1-dehydrogenase subfamily. Zn(2+) is required as a cofactor.

It carries out the reaction D-glucose + NAD(+) = D-glucono-1,5-lactone + NADH + H(+). The enzyme catalyses D-glucose + NADP(+) = D-glucono-1,5-lactone + NADPH + H(+). In terms of biological role, catalyzes the NAD(P)(+)-dependent oxidation of D-glucose to D-gluconate via gluconolactone. Can utilize both NAD(+) and NADP(+) as electron acceptor. Is involved in the degradation of glucose through a non-phosphorylative variant of the Entner-Doudoroff pathway. This is Glucose 1-dehydrogenase 1 from Vulcanisaeta moutnovskia (strain 768-28).